Here is a 226-residue protein sequence, read N- to C-terminus: ATP-dependent dethiobiotin synthetase BioD (226 aa).

An ATP-binding site is contributed by 13 to 18 (DVGKTV). Threonine 17 provides a ligand contact to Mg(2+). Lysine 38 is a catalytic residue. ATP-binding positions include aspartate 55, 116–119 (EGAG), and 176–177 (NR). Mg(2+) contacts are provided by aspartate 55 and glutamate 116.

This sequence belongs to the dethiobiotin synthetase family. As to quaternary structure, homodimer. The cofactor is Mg(2+).

The protein resides in the cytoplasm. The catalysed reaction is (7R,8S)-7,8-diammoniononanoate + CO2 + ATP = (4R,5S)-dethiobiotin + ADP + phosphate + 3 H(+). The protein operates within cofactor biosynthesis; biotin biosynthesis; biotin from 7,8-diaminononanoate: step 1/2. Functionally, catalyzes a mechanistically unusual reaction, the ATP-dependent insertion of CO2 between the N7 and N8 nitrogen atoms of 7,8-diaminopelargonic acid (DAPA, also called 7,8-diammoniononanoate) to form a ureido ring. In Aliivibrio fischeri (strain MJ11) (Vibrio fischeri), this protein is ATP-dependent dethiobiotin synthetase BioD.